The following is a 399-amino-acid chain: Exodeoxyribonuclease 7 large subunit (399 aa).

This sequence belongs to the XseA family. In terms of assembly, heterooligomer composed of large and small subunits.

It localises to the cytoplasm. The enzyme catalyses Exonucleolytic cleavage in either 5'- to 3'- or 3'- to 5'-direction to yield nucleoside 5'-phosphates.. In terms of biological role, bidirectionally degrades single-stranded DNA into large acid-insoluble oligonucleotides, which are then degraded further into small acid-soluble oligonucleotides. This is Exodeoxyribonuclease 7 large subunit from Clostridium acetobutylicum (strain ATCC 824 / DSM 792 / JCM 1419 / IAM 19013 / LMG 5710 / NBRC 13948 / NRRL B-527 / VKM B-1787 / 2291 / W).